The sequence spans 279 residues: MRKIKIITDSTAGLTLEEAAKWNIDVLYLTVEIDGKVYNPKTDITPEEFMVRMAETKELPKSSQPAIGSFVEAYEKYTAEGYEILSIHLTEKLSGTVNAARQAADMVEGNITVVDCDYTARGQAFQVLKAAEMAQSGDYSVEEIHAKINDIRDKTKLYIVVVTLDNLIKGGRVGRMQGFLGSLLNIKLIAKLTDGQLEEETKVRSNKKVLQYCLNLIKDEPKKIQHLDVVHANGLNLADDFIAESKEITGLTEIPLFFADPVISTHAGTGAFAFMYYTD.

The region spanning 4–278 is the DegV domain; that stretch reads IKIITDSTAG…TGAFAFMYYT (275 aa). Hexadecanoate-binding residues include S62 and S94.

May bind long-chain fatty acids, such as palmitate, and may play a role in lipid transport or fatty acid metabolism. The polypeptide is DegV domain-containing protein lmo1863 (Listeria monocytogenes serovar 1/2a (strain ATCC BAA-679 / EGD-e)).